The following is an 880-amino-acid chain: MGSTRLRNASVWLCGLLCLLQVVPSINADVSGCKPGFSSAEYIFSVNRRELERGRKLGKVNFSDCTTRKHGLYDVGDSRFRVLPDGTVLVKRHVKLHKDTKFTISTWDARGIKHSTNIAVASKRHRSGEEAHSRSSKLPVLTFPETHTGLKRKKRDWVIPPIKVSENERGPFPKRLVQIKSNKDRFNKVYYSITGQGADNPPQGVFRIEWETGWMLVTRPLDREEYDKYVLSSHAVSENGSPVEEPMEITINVIDQNDNRPKFTQDVFRGSVREGVQPGTQVMAVSATDEDDNIDSLNGVLSYSILKQDPEEPIPNLFTINRETGVISLIGTGLDREKFPEYTLTVQATDLEGAGLSVEGKAIIQITDANDNAPIFDPKTYTALVPENEIGFEVQRLSVTDLDMPGTPAWQAVYKIRVNEGGFFNITTDPESNQGILTTAKGLDFELRKQYVLQITVENAEPFSVPLPTSTATVTVTVEDVNEAPFFVPAVSRVDVSEDLSRGEKIISLVAQDPDKQQIQKLSYFIGNDPARWLTVNKDNGIVTGNGNLDRESEYVKNNTYTVIMLVTDDGVSVGTGTGTLILHVLDVNDNGPVPSPRVFTMCDQNPEPQVLTISDADIPPNTYPYKVSLSHGSDLTWKAELDSKGTSMLLSPTQQLKKGDYSIYVLLSDAQNNPQLTVVNATVCSCEGKAIKCQEKLVGGFDLPIILVILGSVLALLILFLLLLLFLKRKKVVKEPLLLPEDDTRDNIFYYGEEGGGEEDQDYDLSQLHRGLDSRPDIMRNDVVPTLMPAPHYRPRPSNPDEIGNFIDENLDAADNDPTAPPYDSLLVFDYEGSGSEAASLSSLNSSNSNDEHDYNYLSDWGSRFRKLADMYGGDDDEE.

Positions 1-28 are cleaved as a signal peptide; it reads MGSTRLRNASVWLCGLLCLLQVVPSINA. A propeptide spanning residues 29-155 is cleaved from the precursor; that stretch reads DVSGCKPGFS…THTGLKRKKR (127 aa). Residue Asn61 is glycosylated (N-linked (GlcNAc...) asparagine). 5 consecutive Cadherin domains span residues 156-263, 264-376, 377-487, 488-593, and 594-704; these read DWVI…RPKF, TQDV…APIF, DPKT…APFF, VPAV…DNGP, and VPSP…GFDL. Residues 156–703 are Extracellular-facing; it reads DWVIPPIKVS…CQEKLVGGFD (548 aa). 3 O-linked (GalNAc...) threonine glycosylation sites follow: Thr343, Thr382, and Thr400. N-linked (GlcNAc...) asparagine glycosylation occurs at Asn425. O-linked (GalNAc...) threonine glycans are attached at residues Thr428, Thr469, Thr471, Thr473, and Thr475. Asn558 carries N-linked (GlcNAc...) asparagine glycosylation. O-linked (GalNAc...) threonine glycosylation is found at Thr562, Thr576, Thr578, and Thr580. 2 disulfide bridges follow: Cys603-Cys687 and Cys685-Cys694. N-linked (GlcNAc...) asparagine glycosylation is present at Asn681. The helical transmembrane segment at 704–728 threads the bilayer; the sequence is LPIILVILGSVLALLILFLLLLLFL. The Cytoplasmic portion of the chain corresponds to 729–880; the sequence is KRKKVVKEPL…DMYGGDDDEE (152 aa). The tract at residues 790–826 is disordered; sequence PAPHYRPRPSNPDEIGNFIDENLDAADNDPTAPPYDS.

Interacts with CTNNB1.

It is found in the cell membrane. Functionally, cadherins are calcium-dependent cell adhesion proteins. They preferentially interact with themselves in a homophilic manner in connecting cells; cadherins may thus contribute to the sorting of heterogeneous cell types. The chain is EP-cadherin from Xenopus laevis (African clawed frog).